Consider the following 346-residue polypeptide: Holliday junction branch migration complex subunit RuvB (346 aa).

The large ATPase domain (RuvB-L) stretch occupies residues 1–182 (MSEAARLIAP…FGIPVRLNFY (182 aa)). ATP is bound by residues R22, G63, K66, T67, T68, 129-131 (EDF), R172, Y182, and R219. T67 contributes to the Mg(2+) binding site. The interval 183 to 253 (TVEELELIVR…IADEALTRLL (71 aa)) is small ATPAse domain (RuvB-S). The interval 256–346 (SMGLDQLDRR…SQFRLTLEDD (91 aa)) is head domain (RuvB-H). The DNA site is built by R292, R311, and R316.

This sequence belongs to the RuvB family. As to quaternary structure, homohexamer. Forms an RuvA(8)-RuvB(12)-Holliday junction (HJ) complex. HJ DNA is sandwiched between 2 RuvA tetramers; dsDNA enters through RuvA and exits via RuvB. An RuvB hexamer assembles on each DNA strand where it exits the tetramer. Each RuvB hexamer is contacted by two RuvA subunits (via domain III) on 2 adjacent RuvB subunits; this complex drives branch migration. In the full resolvosome a probable DNA-RuvA(4)-RuvB(12)-RuvC(2) complex forms which resolves the HJ.

It localises to the cytoplasm. The catalysed reaction is ATP + H2O = ADP + phosphate + H(+). Functionally, the RuvA-RuvB-RuvC complex processes Holliday junction (HJ) DNA during genetic recombination and DNA repair, while the RuvA-RuvB complex plays an important role in the rescue of blocked DNA replication forks via replication fork reversal (RFR). RuvA specifically binds to HJ cruciform DNA, conferring on it an open structure. The RuvB hexamer acts as an ATP-dependent pump, pulling dsDNA into and through the RuvAB complex. RuvB forms 2 homohexamers on either side of HJ DNA bound by 1 or 2 RuvA tetramers; 4 subunits per hexamer contact DNA at a time. Coordinated motions by a converter formed by DNA-disengaged RuvB subunits stimulates ATP hydrolysis and nucleotide exchange. Immobilization of the converter enables RuvB to convert the ATP-contained energy into a lever motion, pulling 2 nucleotides of DNA out of the RuvA tetramer per ATP hydrolyzed, thus driving DNA branch migration. The RuvB motors rotate together with the DNA substrate, which together with the progressing nucleotide cycle form the mechanistic basis for DNA recombination by continuous HJ branch migration. Branch migration allows RuvC to scan DNA until it finds its consensus sequence, where it cleaves and resolves cruciform DNA. The protein is Holliday junction branch migration complex subunit RuvB of Rhizobium meliloti (strain 1021) (Ensifer meliloti).